The chain runs to 128 residues: Lysozyme C-1 (128 aa).

The C-type lysozyme domain maps to 1 to 128 (KVYDRCEFAR…VSQYIRGCKL (128 aa)). Disulfide bonds link Cys-6/Cys-126, Cys-30/Cys-114, Cys-63/Cys-79, and Cys-75/Cys-93. Active-site residues include Glu-35 and Asp-51.

It belongs to the glycosyl hydrolase 22 family. In terms of assembly, monomer.

Its subcellular location is the secreted. It carries out the reaction Hydrolysis of (1-&gt;4)-beta-linkages between N-acetylmuramic acid and N-acetyl-D-glucosamine residues in a peptidoglycan and between N-acetyl-D-glucosamine residues in chitodextrins.. Its function is as follows. Lysozymes have primarily a bacteriolytic function; those in tissues and body fluids are associated with the monocyte-macrophage system and enhance the activity of immunoagents. The chain is Lysozyme C-1 from Sus scrofa (Pig).